The primary structure comprises 659 residues: PAN2-PAN3 deadenylation complex subunit PAN3 (659 aa).

Disordered stretches follow at residues 1-26 (MASAGKPALDDSRRGTGSPKMKAREN) and 103-132 (PKAANAAPFQPRSVASRSNTSTPNSRQENI). A C3H1-type zinc finger spans residues 26 to 55 (NAKDTLCRNVTIYGRCRYEDKGCAFNHDPL). Residues 115–132 (SVASRSNTSTPNSRQENI) are compositionally biased toward polar residues. The pseudokinase domain stretch occupies residues 262–522 (QTLPNTQLPA…NIDIFITGIS (261 aa)). ATP is bound by residues R314, 363-370 (DYYPLSKT), and 422-423 (SK). The stretch at 523–561 (SQLMSTFDSALHLDDQLTSDLSRELENGRLVRLMTKLNL) forms a coiled coil. The segment at 562 to 659 (VNERPEYEHD…ALLKPARRMH (98 aa)) is knob domain.

It belongs to the protein kinase superfamily. PAN3 family. As to quaternary structure, homodimer. Forms a heterotrimer with a catalytic subunit pan2 to form the poly(A)-nuclease (PAN) deadenylation complex. Interacts (via PAM-2 motif) with poly(A)-binding protein pab1 (via PABC domain), conferring substrate specificity of the enzyme complex.

The protein resides in the cytoplasm. In terms of biological role, regulatory subunit of the poly(A)-nuclease (PAN) deadenylation complex, one of two cytoplasmic mRNA deadenylases involved in mRNA turnover. PAN specifically shortens poly(A) tails of RNA and the activity is stimulated by poly(A)-binding protein pab1. PAN deadenylation is followed by rapid degradation of the shortened mRNA tails by the CCR4-NOT complex. Deadenylated mRNAs are then degraded by two alternative mechanisms, namely exosome-mediated 3'-5' exonucleolytic degradation, or deadenylation-dependent mRNA decaping and subsequent 5'-3' exonucleolytic degradation by xrn1. May also be involved in post-transcriptional maturation of mRNA poly(A) tails. pan3 acts as a positive regulator for PAN activity, recruiting the catalytic subunit pan2 to mRNA via its interaction with RNA and with pab1. This Aspergillus clavatus (strain ATCC 1007 / CBS 513.65 / DSM 816 / NCTC 3887 / NRRL 1 / QM 1276 / 107) protein is PAN2-PAN3 deadenylation complex subunit PAN3.